The following is a 62-amino-acid chain: Large ribosomal subunit protein uL30 (62 aa).

Belongs to the universal ribosomal protein uL30 family. As to quaternary structure, part of the 50S ribosomal subunit.

The sequence is that of Large ribosomal subunit protein uL30 from Herpetosiphon aurantiacus (strain ATCC 23779 / DSM 785 / 114-95).